The primary structure comprises 87 residues: Small ribosomal subunit protein uS17 (87 aa).

Belongs to the universal ribosomal protein uS17 family. As to quaternary structure, part of the 30S ribosomal subunit.

Its function is as follows. One of the primary rRNA binding proteins, it binds specifically to the 5'-end of 16S ribosomal RNA. In Bacillus thuringiensis (strain Al Hakam), this protein is Small ribosomal subunit protein uS17.